We begin with the raw amino-acid sequence, 304 residues long: Glycine--tRNA ligase alpha subunit (304 aa).

It belongs to the class-II aminoacyl-tRNA synthetase family. Tetramer of two alpha and two beta subunits.

It is found in the cytoplasm. The enzyme catalyses tRNA(Gly) + glycine + ATP = glycyl-tRNA(Gly) + AMP + diphosphate. This Yersinia pseudotuberculosis serotype O:1b (strain IP 31758) protein is Glycine--tRNA ligase alpha subunit.